Here is an 865-residue protein sequence, read N- to C-terminus: Chitin synthase 3 (865 aa).

Residues 1–59 are disordered; that stretch reads MASQYPGHQLDDIPSTNVYRPPPRHEDDEAEHALLHQNSAYQSQYDDPHSRPLTPGQES. The span at 23–34 shows a compositional bias: basic and acidic residues; it reads PRHEDDEAEHAL. Residues 36-45 show a composition bias toward polar residues; that stretch reads HQNSAYQSQY. N-linked (GlcNAc...) asparagine glycans are attached at residues Asn-64, Asn-95, and Asn-538. 3 helical membrane-spanning segments follow: residues 565 to 585, 620 to 640, and 650 to 670; these read FFLH…WFSL, IINT…FILA, and VAYI…IVLS. A glycan (N-linked (GlcNAc...) asparagine) is linked at Asn-682. The next 3 membrane-spanning stretches (helical) occupy residues 707 to 727, 735 to 755, and 837 to 857; these read IVII…FLYM, SFAQ…IYAF, and LVAT…SDSL.

The protein belongs to the chitin synthase family. Class III subfamily.

The protein resides in the cell membrane. It catalyses the reaction [(1-&gt;4)-N-acetyl-beta-D-glucosaminyl](n) + UDP-N-acetyl-alpha-D-glucosamine = [(1-&gt;4)-N-acetyl-beta-D-glucosaminyl](n+1) + UDP + H(+). Its function is as follows. Polymerizes chitin, a structural polymer of the cell wall and septum, by transferring the sugar moiety of UDP-GlcNAc to the non-reducing end of the growing chitin polymer. Is not only stable at different pH, but is also able to tolerate a broad temperature range. With CHS2, plays an important role in virulence. The chain is Chitin synthase 3 from Exophiala dermatitidis (strain ATCC 34100 / CBS 525.76 / NIH/UT8656) (Black yeast).